The following is a 473-amino-acid chain: Homeobox protein ATH1 (473 aa).

Residues 205 to 221 (SKYLHSVQEILSHFAAY) form an SR/KY domain region. The segment at 266-336 (QRRALEAKKT…NLRERICKKI (71 aa)) is BELL domain. The segment at residues 372 to 434 (IWRPQRGLPE…NARVRLWKPM (63 aa)) is a DNA-binding region (homeobox). Positions 448 to 473 (NNSHIQPNGPTLRMPKSVMMSQAMHK) are disordered.

It belongs to the TALE/BELL homeobox family. May form heterodimeric complex with the TALE/KNOX protein STM. As to expression, most abundant in flowers.

The protein resides in the nucleus. Its function is as follows. Transcription factor which may be involved in the signal transduction pathway downstream of the COP1 gene. Controls floral competency as a specific activator of FLC expression. Is responsive of the nuclear import of SHOOT MERISTEMLESS (STM). This Arabidopsis thaliana (Mouse-ear cress) protein is Homeobox protein ATH1 (ATH1).